The primary structure comprises 1365 residues: Patatin-like phospholipase domain-containing protein 6 (1365 aa).

Residues 1-50 (MGTSSHGLATNSSGAKVAERDGFQDVPAPGEGAAGRICGAQPVPFVPQVL) are Lumenal-facing. Residue Asn11 is glycosylated (N-linked (GlcNAc...) asparagine). Residues 51 to 71 (GVMIGAGVAVVVTAVLILLVV) form a helical membrane-spanning segment. Residues 72–1365 (RRLRVPKTPA…QEPPGSATDA (1294 aa)) lie on the Cytoplasmic side of the membrane. Position 186 to 313 (186 to 313 (VLGHFEKPLF…VRVVQIIMVR (128 aa))) interacts with a nucleoside 3',5'-cyclic phosphate. Disordered stretches follow at residues 343-427 (FPSP…RSDF) and 441-463 (QEGA…PREQ). At Ser345 the chain carries Phosphoserine. Over residues 350 to 367 (TRTSPVRGSKRMVSTSAT) the composition is skewed to polar residues. Thr352 carries the phosphothreonine modification. 2 positions are modified to phosphoserine: Ser353 and Ser363. Residues 375 to 389 (GRPPDPTGAPLPGPT) are compositionally biased toward pro residues. Ser411 carries the phosphoserine modification. Thr455 carries the post-translational modification Phosphothreonine. A nucleoside 3',5'-cyclic phosphate contacts are provided by residues 502 to 624 (ELAK…VAAR) and 620 to 740 (TVAA…LSQK). The 167-residue stretch at 971-1137 (LVLGGGGARG…INNLPADIAR (167 aa)) folds into the PNPLA domain. The GXGXXG signature appears at 975–980 (GGGARG). The short motif at 1002–1006 (GTSIG) is the GXSXG element. Ser1004 acts as the Nucleophile in catalysis. Asp1124 (proton acceptor) is an active-site residue. A DGA/G motif is present at residues 1124–1126 (DGG). Positions 1296–1365 (SYVSDGCADG…QEPPGSATDA (70 aa)) are disordered. Residues 1303–1319 (ADGEESDCLTEYEEDAG) show a composition bias toward acidic residues.

Belongs to the NTE family. Glycosylated.

Its subcellular location is the endoplasmic reticulum membrane. The catalysed reaction is a 1-acyl-sn-glycero-3-phosphocholine + H2O = sn-glycerol 3-phosphocholine + a fatty acid + H(+). It catalyses the reaction 1-hexadecanoyl-sn-glycero-3-phosphocholine + H2O = sn-glycerol 3-phosphocholine + hexadecanoate + H(+). It carries out the reaction 1-(9Z-octadecenoyl)-sn-glycero-3-phosphocholine + H2O = sn-glycerol 3-phosphocholine + (9Z)-octadecenoate + H(+). The enzyme catalyses 1-hexadecanoylglycerol + H2O = glycerol + hexadecanoate + H(+). The catalysed reaction is 2-hexadecanoylglycerol + H2O = glycerol + hexadecanoate + H(+). It catalyses the reaction 1-(9Z-octadecenoyl)-glycerol + H2O = glycerol + (9Z)-octadecenoate + H(+). It carries out the reaction 2-(9Z-octadecenoyl)-glycerol + H2O = glycerol + (9Z)-octadecenoate + H(+). The enzyme catalyses 2-(5Z,8Z,11Z,14Z-eicosatetraenoyl)-glycerol + H2O = glycerol + (5Z,8Z,11Z,14Z)-eicosatetraenoate + H(+). The catalysed reaction is 1-hexadecanoyl-sn-glycero-3-phosphate + H2O = sn-glycerol 3-phosphate + hexadecanoate + H(+). With respect to regulation, inhibited by a series a OPs such as mipafox (MPX), phenyl saligenin phosphate (PSP), phenyl dipentyl phosphinate (PDPP), diisopropyl fluorophosphate and paraoxon. Functionally, phospholipase B that deacylates intracellular phosphatidylcholine (PtdCho), generating glycerophosphocholine (GroPtdCho). This deacylation occurs at both sn-2 and sn-1 positions of PtdCho. Catalyzes the hydrolysis of several naturally occurring membrane-associated lipids. Hydrolyzes lysophospholipids and monoacylglycerols, preferring the 1-acyl to the 2-acyl isomer. Does not catalyze hydrolysis of di- or triacylglycerols or fatty acid amides. The polypeptide is Patatin-like phospholipase domain-containing protein 6 (PNPLA6) (Pongo abelii (Sumatran orangutan)).